We begin with the raw amino-acid sequence, 507 residues long: Histidine ammonia-lyase (507 aa).

The 5-imidazolinone (Ser-Gly) cross-link spans 143-145 (SSG). Position 144 is a 2,3-didehydroalanine (Ser) (serine 144).

The protein belongs to the PAL/histidase family. Contains an active site 4-methylidene-imidazol-5-one (MIO), which is formed autocatalytically by cyclization and dehydration of residues Ser-Ser-Gly.

The protein localises to the cytoplasm. The catalysed reaction is L-histidine = trans-urocanate + NH4(+). Its pathway is amino-acid degradation; L-histidine degradation into L-glutamate; N-formimidoyl-L-glutamate from L-histidine: step 1/3. This is Histidine ammonia-lyase from Alkaliphilus metalliredigens (strain QYMF).